The following is a 453-amino-acid chain: Formimidoylglutamate deiminase (453 aa).

Zn(2+) contacts are provided by His56 and His58. Positions 61, 82, 121, 206, and 209 each coordinate N-formimidoyl-L-glutamate. Position 232 (His232) interacts with Zn(2+). An N-formimidoyl-L-glutamate-binding site is contributed by Glu235. Active-site proton acceptor residues include His269 and Asp320. Asp320 provides a ligand contact to Zn(2+).

The protein belongs to the metallo-dependent hydrolases superfamily. In terms of assembly, homodimer. The cofactor is Zn(2+).

It catalyses the reaction N-formimidoyl-L-glutamate + H2O = N-formyl-L-glutamate + NH4(+). It functions in the pathway amino-acid degradation; L-histidine degradation into L-glutamate; L-glutamate from N-formimidoyl-L-glutamate (deiminase route): step 1/2. Its activity is regulated as follows. Inhibited by the metal chelator dipicolinate. Inhibited by N-formimino-L-aspartate and N-guanidino-L-glutaric acid. Catalyzes the hydrolysis of N-formimino-L-glutamate to N-formyl-L-glutamate and ammonia. This chain is Formimidoylglutamate deiminase, found in Pseudomonas aeruginosa (strain ATCC 15692 / DSM 22644 / CIP 104116 / JCM 14847 / LMG 12228 / 1C / PRS 101 / PAO1).